We begin with the raw amino-acid sequence, 415 residues long: Serine--tRNA ligase (415 aa).

An L-serine-binding site is contributed by 231-233; that stretch reads TAE. 262-264 is a binding site for ATP; that stretch reads RSE. Glu285 lines the L-serine pocket. ATP is bound at residue 349–352; sequence EISS. Ser383 lines the L-serine pocket.

It belongs to the class-II aminoacyl-tRNA synthetase family. Type-1 seryl-tRNA synthetase subfamily. Homodimer. The tRNA molecule binds across the dimer.

The protein localises to the cytoplasm. The catalysed reaction is tRNA(Ser) + L-serine + ATP = L-seryl-tRNA(Ser) + AMP + diphosphate + H(+). It carries out the reaction tRNA(Sec) + L-serine + ATP = L-seryl-tRNA(Sec) + AMP + diphosphate + H(+). It participates in aminoacyl-tRNA biosynthesis; selenocysteinyl-tRNA(Sec) biosynthesis; L-seryl-tRNA(Sec) from L-serine and tRNA(Sec): step 1/1. In terms of biological role, catalyzes the attachment of serine to tRNA(Ser). Is also able to aminoacylate tRNA(Sec) with serine, to form the misacylated tRNA L-seryl-tRNA(Sec), which will be further converted into selenocysteinyl-tRNA(Sec). This is Serine--tRNA ligase from Helicobacter pylori (strain J99 / ATCC 700824) (Campylobacter pylori J99).